Reading from the N-terminus, the 185-residue chain is ATP-dependent protease subunit HslV (185 aa).

The active site involves Thr-12. Residues Ala-168, Cys-171, and Thr-174 each coordinate Na(+).

It belongs to the peptidase T1B family. HslV subfamily. As to quaternary structure, a double ring-shaped homohexamer of HslV is capped on each side by a ring-shaped HslU homohexamer. The assembly of the HslU/HslV complex is dependent on binding of ATP.

Its subcellular location is the cytoplasm. It catalyses the reaction ATP-dependent cleavage of peptide bonds with broad specificity.. With respect to regulation, allosterically activated by HslU binding. Protease subunit of a proteasome-like degradation complex believed to be a general protein degrading machinery. The chain is ATP-dependent protease subunit HslV from Roseobacter denitrificans (strain ATCC 33942 / OCh 114) (Erythrobacter sp. (strain OCh 114)).